Consider the following 512-residue polypeptide: Nuclear fusion protein FUS1 (512 aa).

Residues 72–96 (IGLSIGLPIGIFCFGLLILLCYFYL) form a helical membrane-spanning segment. The tract at residues 97-512 (KRNSVSISNP…VPGDCLQEYD (416 aa)) is hydrophilic. Threonine 178 is modified (phosphothreonine). Residues serine 190 and serine 256 each carry the phosphoserine modification. 2 positions are modified to phosphothreonine: threonine 281 and threonine 424. The SH3 domain occupies 436 to 512 (QLGKTYTVIQ…VPGDCLQEYD (77 aa)).

Post-translationally, O-glycosylated.

It is found in the membrane. Its function is as follows. Required for cell fusion. Negatively regulates Sho1p signaling to ensure efficient cell fusion. Interacts with SHO1. The polypeptide is Nuclear fusion protein FUS1 (FUS1) (Saccharomyces cerevisiae (strain ATCC 204508 / S288c) (Baker's yeast)).